We begin with the raw amino-acid sequence, 582 residues long: External alternative NAD(P)H-ubiquinone oxidoreductase B2, mitochondrial (582 aa).

The N-terminal 38 residues, 1 to 38 (MRNFSVFERFSKAFKDHPSLTRILVVSTISGGGLIAYS), are a transit peptide targeting the mitochondrion. Residue 60–90 (KVVLLGTGWAGTSFLKNLNNSQYEVQIISPR) participates in FAD binding. NAD(+) is bound at residue 223–259 (LHFVVVGGGPTGVEFAAELHDFVTEDLVSLYPRAKGS). The EF-hand domain occupies 379–414 (KVMEDVSAIFSKADKDKSGTLTLKEFQEAMDDICVR). D392, D394, S396, T398, and E403 together coordinate Ca(2+). The Microbody targeting signal signature appears at 573–582 (FIFGRDSSSI).

Belongs to the NADH dehydrogenase family. FAD serves as cofactor. In terms of tissue distribution, mostly expressed in seedlings and roots and, to a lower extent, in cotyledons, leaves, stems, buds and flowers.

It is found in the mitochondrion inner membrane. It localises to the peroxisome. It catalyses the reaction a quinone + NADH + H(+) = a quinol + NAD(+). The enzyme catalyses a ubiquinone + NADH + H(+) = a ubiquinol + NAD(+). NADPH oxidase activity is stimulated by calcium ions. In terms of biological role, alternative NADH-ubiquinone oxidoreductase which catalyzes the oxidation of mitochondrial NADH does not translocate protons across the inner mitochondrial membrane. Calcium-dependent NAD(P)H dehydrogenase; more efficient on NADH. Binds calcium ions. The sequence is that of External alternative NAD(P)H-ubiquinone oxidoreductase B2, mitochondrial (NDB2) from Arabidopsis thaliana (Mouse-ear cress).